The primary structure comprises 384 residues: Formate-dependent phosphoribosylglycinamide formyltransferase (384 aa).

N(1)-(5-phospho-beta-D-ribosyl)glycinamide is bound by residues 14 to 15 (EL) and Glu-74. Residues Arg-106, Lys-147, 152–157 (SSGKGQ), 187–190 (EEFI), and Glu-195 each bind ATP. One can recognise an ATP-grasp domain in the interval 111 to 300 (RLAAETLHLP…EFALHVRAVL (190 aa)). Mg(2+) contacts are provided by Glu-259 and Glu-271. N(1)-(5-phospho-beta-D-ribosyl)glycinamide-binding positions include Asp-278, Lys-348, and 355–356 (RR).

Belongs to the PurK/PurT family. Homodimer.

The catalysed reaction is N(1)-(5-phospho-beta-D-ribosyl)glycinamide + formate + ATP = N(2)-formyl-N(1)-(5-phospho-beta-D-ribosyl)glycinamide + ADP + phosphate + H(+). It participates in purine metabolism; IMP biosynthesis via de novo pathway; N(2)-formyl-N(1)-(5-phospho-D-ribosyl)glycinamide from N(1)-(5-phospho-D-ribosyl)glycinamide (formate route): step 1/1. In terms of biological role, involved in the de novo purine biosynthesis. Catalyzes the transfer of formate to 5-phospho-ribosyl-glycinamide (GAR), producing 5-phospho-ribosyl-N-formylglycinamide (FGAR). Formate is provided by PurU via hydrolysis of 10-formyl-tetrahydrofolate. The chain is Formate-dependent phosphoribosylglycinamide formyltransferase from Bacillus velezensis (strain DSM 23117 / BGSC 10A6 / LMG 26770 / FZB42) (Bacillus amyloliquefaciens subsp. plantarum).